A 311-amino-acid chain; its full sequence is Aspartate carbamoyltransferase catalytic subunit (311 aa).

Carbamoyl phosphate is bound by residues Arg-55 and Thr-56. Lys-85 provides a ligand contact to L-aspartate. Positions 106, 135, and 138 each coordinate carbamoyl phosphate. Residues Arg-168 and Arg-230 each contribute to the L-aspartate site. Residues Leu-268 and Pro-269 each coordinate carbamoyl phosphate.

Belongs to the aspartate/ornithine carbamoyltransferase superfamily. ATCase family. As to quaternary structure, heterododecamer (2C3:3R2) of six catalytic PyrB chains organized as two trimers (C3), and six regulatory PyrI chains organized as three dimers (R2).

The catalysed reaction is carbamoyl phosphate + L-aspartate = N-carbamoyl-L-aspartate + phosphate + H(+). The protein operates within pyrimidine metabolism; UMP biosynthesis via de novo pathway; (S)-dihydroorotate from bicarbonate: step 2/3. Catalyzes the condensation of carbamoyl phosphate and aspartate to form carbamoyl aspartate and inorganic phosphate, the committed step in the de novo pyrimidine nucleotide biosynthesis pathway. This is Aspartate carbamoyltransferase catalytic subunit from Escherichia coli (strain 55989 / EAEC).